The following is a 180-amino-acid chain: Cytidylate kinase (180 aa).

7–15 lines the ATP pocket; sequence GLPGSGTST.

This sequence belongs to the cytidylate kinase family. Type 2 subfamily.

The protein localises to the cytoplasm. It catalyses the reaction CMP + ATP = CDP + ADP. It carries out the reaction dCMP + ATP = dCDP + ADP. The sequence is that of Cytidylate kinase (cmk) from Methanosarcina mazei (strain ATCC BAA-159 / DSM 3647 / Goe1 / Go1 / JCM 11833 / OCM 88) (Methanosarcina frisia).